A 354-amino-acid chain; its full sequence is Guanine nucleotide-binding protein alpha-3 subunit (354 aa).

A lipid anchor (N-myristoyl glycine) is attached at glycine 2. Cysteine 4 carries the S-palmitoyl cysteine lipid modification. Residues 32 to 354 (KVVKLLLLGA…QANLQGCGLY (323 aa)) enclose the G-alpha domain. A G1 motif region spans residues 35 to 48 (KLLLLGAGECGKST). GTP is bound by residues 40-47 (GAGECGKS), 176-182 (LLSRIKT), 201-205 (DVGGQ), 270-273 (NKKD), and alanine 326. The Mg(2+) site is built by serine 47 and threonine 182. Residues 174–182 (DILLSRIKT) are G2 motif. The interval 197 to 206 (FRVFDVGGQR) is G3 motif. The tract at residues 266-273 (ILFLNKKD) is G4 motif. The interval 324–329 (TCATDT) is G5 motif.

Belongs to the G-alpha family. G(q) subfamily. In terms of assembly, g proteins are composed of 3 units; alpha, beta and gamma. The alpha chain contains the guanine nucleotide binding site.

In terms of biological role, guanine nucleotide-binding proteins (G proteins) are involved as modulators or transducers in various transmembrane signaling systems. Promotes transcription of 3',5'-cyclic phosphodiesterases pde-1 and pde-5, leading to reduced cGMP levels in sensory neurons. This causes suppression of insulin production and signaling which leads to increased daf-16 activity and contributes to increased adult lifespan and resistance to oxidative stress. In addition, by reducing cGMP levels, inhibits TGF-beta signaling pathways. Involved in behavioral response to P.aeruginosa by controlling the expression of daf-7, a member of the TGF-beta family, in ASJ sensory neurons. The polypeptide is Guanine nucleotide-binding protein alpha-3 subunit (gpa-3) (Caenorhabditis briggsae).